A 318-amino-acid chain; its full sequence is Glutathione synthetase (318 aa).

The 186-residue stretch at 129 to 314 (KLAITEFPDL…VPEMFAVALE (186 aa)) folds into the ATP-grasp domain. 155-211 (HAAQGDVIVKPLDGMGGTGIFRLQRSEPNLNAILETLTDNGTRTIMAQRYIPEIVKG) lines the ATP pocket. Mg(2+) is bound by residues E285 and N287.

Belongs to the prokaryotic GSH synthase family. The cofactor is Mg(2+). Mn(2+) serves as cofactor.

The catalysed reaction is gamma-L-glutamyl-L-cysteine + glycine + ATP = glutathione + ADP + phosphate + H(+). Its pathway is sulfur metabolism; glutathione biosynthesis; glutathione from L-cysteine and L-glutamate: step 2/2. This Bordetella bronchiseptica (strain ATCC BAA-588 / NCTC 13252 / RB50) (Alcaligenes bronchisepticus) protein is Glutathione synthetase.